A 70-amino-acid chain; its full sequence is Small ribosomal subunit protein bS21 (70 aa).

Belongs to the bacterial ribosomal protein bS21 family.

The sequence is that of Small ribosomal subunit protein bS21 from Campylobacter fetus subsp. fetus (strain 82-40).